We begin with the raw amino-acid sequence, 225 residues long: Small ribosomal subunit protein uS3 (225 aa).

Residues Val16–Lys85 form the KH type-2 domain. The tract at residues Gly200–Ser225 is disordered. A compositionally biased stretch (basic and acidic residues) spans Glu208–Arg217.

It belongs to the universal ribosomal protein uS3 family. In terms of assembly, part of the 30S ribosomal subunit.

In terms of biological role, binds the lower part of the 30S subunit head. In Thermoplasma volcanium (strain ATCC 51530 / DSM 4299 / JCM 9571 / NBRC 15438 / GSS1), this protein is Small ribosomal subunit protein uS3.